Reading from the N-terminus, the 258-residue chain is Putative cysteine-rich repeat secretory protein 35 (258 aa).

The N-terminal stretch at Met1–Ser29 is a signal peptide. 2 consecutive Gnk2-homologous domains span residues Tyr36–Pro138 and Phe146–Phe255.

This sequence belongs to the cysteine-rich repeat secretory protein family.

Its subcellular location is the secreted. The polypeptide is Putative cysteine-rich repeat secretory protein 35 (CRRSP35) (Arabidopsis thaliana (Mouse-ear cress)).